A 414-amino-acid polypeptide reads, in one-letter code: Acetate kinase (414 aa).

Asparagine 7 is a binding site for Mg(2+). Lysine 14 contributes to the ATP binding site. Arginine 99 serves as a coordination point for substrate. Aspartate 157 functions as the Proton donor/acceptor in the catalytic mechanism. ATP is bound by residues 217-221 (HLGNG) and 341-345 (GIGEN). Glutamate 395 is a Mg(2+) binding site.

This sequence belongs to the acetokinase family. In terms of assembly, homodimer. It depends on Mg(2+) as a cofactor. The cofactor is Mn(2+).

Its subcellular location is the cytoplasm. It carries out the reaction acetate + ATP = acetyl phosphate + ADP. It participates in metabolic intermediate biosynthesis; acetyl-CoA biosynthesis; acetyl-CoA from acetate: step 1/2. Its function is as follows. Catalyzes the formation of acetyl phosphate from acetate and ATP. Can also catalyze the reverse reaction. In Solibacter usitatus (strain Ellin6076), this protein is Acetate kinase.